The following is a 423-amino-acid chain: Mannose-6-phosphate isomerase (423 aa).

A2 is subject to N-acetylalanine. Phosphoserine is present on residues S102 and S108. Zn(2+) is bound by residues Q110, H112, E137, and H276. The active site involves R295.

Belongs to the mannose-6-phosphate isomerase type 1 family. The cofactor is Zn(2+).

It localises to the cytoplasm. The catalysed reaction is D-mannose 6-phosphate = D-fructose 6-phosphate. It functions in the pathway nucleotide-sugar biosynthesis; GDP-alpha-D-mannose biosynthesis; alpha-D-mannose 1-phosphate from D-fructose 6-phosphate: step 1/2. Isomerase that catalyzes the interconversion of fructose-6-P and mannose-6-P and has a critical role in the supply of D-mannose derivatives required for many eukaryotic glycosylation reactions. In Bos taurus (Bovine), this protein is Mannose-6-phosphate isomerase (MPI).